Consider the following 336-residue polypeptide: HTH-type transcriptional repressor PurR (336 aa).

The HTH lacI-type domain maps to Ala-2–Val-56. A DNA-binding region (H-T-H motif) is located at residues Ile-4–Asn-23. Residues Ser-48–Val-56 mediate DNA binding. Tyr-73, Lys-188, Phe-219, and Asp-273 together coordinate hypoxanthine.

Homodimer.

It functions in the pathway purine metabolism; purine nucleotide biosynthesis [regulation]. Its function is as follows. Is the main repressor of the genes involved in the de novo synthesis of purine nucleotides, regulating purB, purC, purEK, purF, purHD, purL, purMN and guaBA expression. PurR is allosterically activated to bind its cognate DNA by binding the purine corepressors, hypoxanthine or guanine, thereby effecting transcription repression. In Actinobacillus pleuropneumoniae serotype 5b (strain L20), this protein is HTH-type transcriptional repressor PurR.